The primary structure comprises 308 residues: Ferredoxin--NADP reductase (308 aa).

FAD-binding residues include Glu-26, Gln-34, Tyr-39, Val-77, Phe-106, Asp-266, and Thr-306.

This sequence belongs to the ferredoxin--NADP reductase type 2 family. Homodimer. FAD serves as cofactor.

It carries out the reaction 2 reduced [2Fe-2S]-[ferredoxin] + NADP(+) + H(+) = 2 oxidized [2Fe-2S]-[ferredoxin] + NADPH. This is Ferredoxin--NADP reductase from Lactobacillus delbrueckii subsp. bulgaricus (strain ATCC 11842 / DSM 20081 / BCRC 10696 / JCM 1002 / NBRC 13953 / NCIMB 11778 / NCTC 12712 / WDCM 00102 / Lb 14).